Reading from the N-terminus, the 295-residue chain is Proline-rich protein 32 (295 aa).

2 disordered regions span residues 10 to 48 (GHAP…GHPG) and 101 to 120 (ATGE…SGQD).

In Bos taurus (Bovine), this protein is Proline-rich protein 32 (PRR32).